We begin with the raw amino-acid sequence, 291 residues long: Putative phosphatase MG263 (291 aa).

The active-site Nucleophile is the aspartate 11. Residue aspartate 11 participates in Mg(2+) binding. Phosphate is bound at residue leucine 12. Residue aspartate 13 coordinates Mg(2+). Residues 60 to 61 (TG) and lysine 217 contribute to the phosphate site. Aspartate 241 is a binding site for Mg(2+). Residue asparagine 244 participates in phosphate binding.

The protein belongs to the HAD-like hydrolase superfamily. Cof family. Requires Mg(2+) as cofactor.

In Mycoplasma genitalium (strain ATCC 33530 / DSM 19775 / NCTC 10195 / G37) (Mycoplasmoides genitalium), this protein is Putative phosphatase MG263.